Consider the following 166-residue polypeptide: Peptide deformylase (166 aa).

The Fe cation site is built by Cys-88 and His-130. Glu-131 is an active-site residue. Fe cation is bound at residue His-134.

Belongs to the polypeptide deformylase family. Fe(2+) is required as a cofactor.

It carries out the reaction N-terminal N-formyl-L-methionyl-[peptide] + H2O = N-terminal L-methionyl-[peptide] + formate. Functionally, removes the formyl group from the N-terminal Met of newly synthesized proteins. Requires at least a dipeptide for an efficient rate of reaction. N-terminal L-methionine is a prerequisite for activity but the enzyme has broad specificity at other positions. This is Peptide deformylase from Caldicellulosiruptor bescii (strain ATCC BAA-1888 / DSM 6725 / KCTC 15123 / Z-1320) (Anaerocellum thermophilum).